Consider the following 512-residue polypeptide: Lysine--tRNA ligase (512 aa).

The Mg(2+) site is built by E408 and E415.

This sequence belongs to the class-II aminoacyl-tRNA synthetase family. In terms of assembly, homodimer. Requires Mg(2+) as cofactor.

The protein localises to the cytoplasm. It carries out the reaction tRNA(Lys) + L-lysine + ATP = L-lysyl-tRNA(Lys) + AMP + diphosphate. This chain is Lysine--tRNA ligase, found in Prochlorococcus marinus subsp. pastoris (strain CCMP1986 / NIES-2087 / MED4).